Reading from the N-terminus, the 104-residue chain is Iron-sulfur cluster assembly protein CyaY (104 aa).

It belongs to the frataxin family.

Its function is as follows. Involved in iron-sulfur (Fe-S) cluster assembly. May act as a regulator of Fe-S biogenesis. The sequence is that of Iron-sulfur cluster assembly protein CyaY from Aliivibrio fischeri (strain ATCC 700601 / ES114) (Vibrio fischeri).